The primary structure comprises 138 residues: Ribosome maturation factor RimP (138 aa).

Belongs to the RimP family.

The protein localises to the cytoplasm. Its function is as follows. Required for maturation of 30S ribosomal subunits. The protein is Ribosome maturation factor RimP of Campylobacter curvus (strain 525.92).